A 617-amino-acid chain; its full sequence is Melatonin-related receptor (617 aa).

The Extracellular segment spans residues 1-30; that stretch reads MGPTLAVPTPYGCIGCKLPQPEYPPALIIF. A helical membrane pass occupies residues 31 to 51; sequence MFCAMVITIVVDLIGNSMVIL. Over 52-64 the chain is Cytoplasmic; sequence AVTKNKKLRNSGN. A helical transmembrane segment spans residues 65–85; the sequence is IFVVSLSVADMLVAIYPYPLM. The Extracellular segment spans residues 86 to 103; the sequence is LHAMSIGGWDLSQLQCQM. A disulfide bond links cysteine 101 and cysteine 178. The helical transmembrane segment at 104–124 threads the bilayer; sequence VGFITGLSVVGSIFNIVAIAI. Topologically, residues 125-143 are cytoplasmic; that stretch reads NRYCYICHSLQYERIFSVR. The chain crosses the membrane as a helical span at residues 144 to 164; it reads NTCIYLVITWIMTVLAVLPNM. The Extracellular segment spans residues 165-188; sequence YIGTIEYDPRTYTCIFNYLNNPVF. A helical transmembrane segment spans residues 189 to 209; it reads TVTIVCIHFVLPLLIVGFCYV. The Cytoplasmic portion of the chain corresponds to 210 to 239; it reads RIWTKVLAARDPAGQNPDNQLAEVRNFLTM. Residues 240–260 traverse the membrane as a helical segment; the sequence is FVIFLLFAVCWCPINVLTVLV. The Extracellular portion of the chain corresponds to 261 to 273; it reads AVSPKEMAGKIPN. A helical membrane pass occupies residues 274 to 294; the sequence is WLYLAAYFIAYFNSCLNAVIY. Topologically, residues 295–617 are cytoplasmic; it reads GLLNENFRRE…VEDDPDEMAV (323 aa). Disordered regions lie at residues 340–438 and 464–596; these read AHAR…ATVY and SVHF…VTTS. Residues 341–353 show a composition bias toward basic and acidic residues; it reads HARDQAREQDRAH. Polar residues predominate over residues 485–500; it reads GSHSKSAFSAATSHPK.

This sequence belongs to the G-protein coupled receptor 1 family. As to quaternary structure, homodimer, and heterodimer with MTNR1A and MTNR1B. Interacts with KAT5. Interacts with RTN4 isoform A/NOGO-A. Interacts with TGFBR1. Interacts with GTF2I. Post-translationally, cleaved by CAPN1 in a calcium-dependent manner. As to expression, hypothalamus and pituitary.

The protein localises to the cell membrane. It localises to the postsynaptic density. Its subcellular location is the nucleus. In terms of biological role, g protein-coupled receptor that plays a role in numerous physiological processes including regulation of energy metabolism, neurite outgrowth or cell migration. Promotes self-renewal and neuronal differentiation of neural progenitor cells through activation of the NOTCH and WNT/beta-catenin signaling pathways. Modulates the KAT5-dependent glucocorticoid receptor signaling by modulating KAT5 subcellular compartmentalisation. Also plays a role in the activation TGFBR1 in the absence of TGFBR2 by interfering with FKBP1A binding to TGFBR1, leading to induction of both canonical and non-canonical SMAD signaling pathways resulting in inhibition of proliferation or promotion of migration. Upon cleavage by CAPN1, functions as a scaffold in the nucleus for interacting partners such as GTF2I to promote FOS promoter activation. The polypeptide is Melatonin-related receptor (GPR50) (Homo sapiens (Human)).